A 486-amino-acid chain; its full sequence is UDP-N-acetylmuramate--L-alanine ligase (486 aa).

126 to 132 contacts ATP; sequence GTHGKTS.

It belongs to the MurCDEF family.

It localises to the cytoplasm. It catalyses the reaction UDP-N-acetyl-alpha-D-muramate + L-alanine + ATP = UDP-N-acetyl-alpha-D-muramoyl-L-alanine + ADP + phosphate + H(+). It participates in cell wall biogenesis; peptidoglycan biosynthesis. Its function is as follows. Cell wall formation. This is UDP-N-acetylmuramate--L-alanine ligase from Buchnera aphidicola subsp. Baizongia pistaciae (strain Bp).